Reading from the N-terminus, the 517-residue chain is Beclin-1-like protein (517 aa).

Residues 76–106 are disordered; sequence LPRHKPPQSQGIPPRPRGASSPQPDATQSGK. Residues 95 to 105 are compositionally biased toward polar residues; the sequence is SSPQPDATQSG. Positions 172-266 form a coiled coil; it reads CLECMRVLSD…NRFNELEDRY (95 aa).

The protein belongs to the beclin family. Component of a phosphatidylinositol 3-kinase (PI3K) complex composed of ATG6, SH3P2 and FREE1. Interacts with SINAT1, SINAT2, SINAT5, SINAT6, TRAF1A and TRAF1B. Interacts with TUBB8/TUB8. Component of a complex made of VPS38/USL1 and PI3K main subunits such as VPS15, ATG6/VPS30 and VPS34. Binds directly to VPS38/USL1. In terms of processing, ubiquitinated. The interaction with SINAT1 or SINAT2, and the presence of TRAF1A/MUSE14 and TRAF1B/MUSE13, mediates its proteasome-dependent degradation. In terms of tissue distribution, highly expressed in mature pollen grains. Expressed in roots, leaves, stems, flowers and siliques.

Its subcellular location is the cytoplasm. The protein resides in the cytoskeleton. Required for normal plant development. Required for pollen germination. Required for autophagic activity. Required to limit the pathogen-associated cell death response. May be involved in vacuolar protein sorting. Binds to microtubules. May facilitate efficient recruitment of other ATG proteins to assemble scaffolds for autophagosome biogenesis. The protein is Beclin-1-like protein of Arabidopsis thaliana (Mouse-ear cress).